The chain runs to 292 residues: Homoserine kinase (292 aa).

Residue 81-91 (RPRSGLGSSGA) participates in ATP binding.

This sequence belongs to the GHMP kinase family. Homoserine kinase subfamily.

The protein localises to the cytoplasm. The enzyme catalyses L-homoserine + ATP = O-phospho-L-homoserine + ADP + H(+). It participates in amino-acid biosynthesis; L-threonine biosynthesis; L-threonine from L-aspartate: step 4/5. In terms of biological role, catalyzes the ATP-dependent phosphorylation of L-homoserine to L-homoserine phosphate. The polypeptide is Homoserine kinase (Thermococcus kodakarensis (strain ATCC BAA-918 / JCM 12380 / KOD1) (Pyrococcus kodakaraensis (strain KOD1))).